A 401-amino-acid polypeptide reads, in one-letter code: Solute carrier family 22 member 17 (401 aa).

10 helical membrane passes run 10-30, 35-55, 69-89, 100-120, 184-203, 218-238, 247-267, 277-297, 309-329, and 336-356; these read GIVL…AAAG, IMAL…GVYL, VALA…GLAL, MITA…FLES, NIWK…HAIR, FYLC…FLGV, GILL…LGLW, TFSV…TLLA, GLGL…AQRL, and FLQH…IMLL.

The protein belongs to the major facilitator (TC 2.A.1) superfamily. Organic cation transporter (TC 2.A.1.19) family. As to expression, widely expressed.

It is found in the cell membrane. Its subcellular location is the vacuole membrane. Its function is as follows. Cell surface receptor for LCN2 (24p3) that plays a key role in iron homeostasis and transport. Able to bind iron-bound LCN2 (holo-24p3), followed by internalization of holo-24p3 and release of iron, thereby increasing intracellular iron concentration and leading to inhibition of apoptosis. Also binds iron-free LCN2 (apo-24p3), followed by internalization of apo-24p3 and its association with an intracellular siderophore, leading to iron chelation and iron transfer to the extracellular medium, thereby reducing intracellular iron concentration and resulting in apoptosis. The polypeptide is Solute carrier family 22 member 17 (Slc22a17) (Mus musculus (Mouse)).